The sequence spans 580 residues: Microcin-J25 export ATP-binding/permease protein McjD (580 aa).

The next 6 helical transmembrane spans lie at 25-45 (FFSMLFITSLSSIIISISPLI), 66-86 (VLLACLYMFCVISNKASVFLF), 143-163 (VSQNILSPVIQLISTIVVVLS), 167-187 (WFSAGVFFLYILVFVIFNTRL), 261-281 (AVILFGSVFIYNILGVLNGVV), and 286-306 (FIMITSYIILLSTPVENIGAL). The 288-residue stretch at 25–312 (FFSMLFITSL…IGALLSEIRQ (288 aa)) folds into the ABC transmembrane type-1 domain. The 234-residue stretch at 345-578 (LSIRELSFSY…NEYISGLASV (234 aa)) folds into the ABC transporter domain. Residue 378–385 (GPSGSGKS) coordinates ATP.

The protein belongs to the ABC transporter superfamily. In terms of assembly, homodimer.

The protein localises to the cell inner membrane. In terms of biological role, is able to protect a cell, which harbors the plasmid pTUC100 encoding microcin J25, against microcin J25. Is required for microcin J25 export out of the producing cells. This Escherichia coli protein is Microcin-J25 export ATP-binding/permease protein McjD (mcjD).